Consider the following 155-residue polypeptide: DNA polymerase epsilon subunit 4 (155 aa).

2 stretches are compositionally biased toward acidic residues: residues 1-16 and 24-48; these read MASE…EEQD and ETEE…DNPE. The segment at 1–76 is disordered; it reads MASEELFEAE…APADNEAKMT (76 aa). Residues 49-65 are compositionally biased toward polar residues; that stretch reads AESTTEQLTEKPVTNGN.

As to quaternary structure, component of the DNA polymerase epsilon complex consisting of four subunits: the catalytic subunit PolE1/DNApol-epsilon255 and the accessory subunits PolE2/DNApol-epsilon58, Chrac-14/DNApolE3 and PolE4/Mes4.

It localises to the nucleus. Functionally, accessory component of the DNA polymerase epsilon complex. Participates in DNA repair and in chromosomal DNA replication. Has a role in cell cycle progression. Required for wing morphogenesis. This chain is DNA polymerase epsilon subunit 4, found in Drosophila melanogaster (Fruit fly).